The chain runs to 529 residues: BAR/IMD domain-containing adapter protein 2-like 2 (529 aa).

In terms of domain architecture, IMD spans 1–239; that stretch reads MAPEMDQFYR…HSPGLLGPAL (239 aa). 2 disordered regions span residues 221–327 and 403–510; these read EASR…GGAR and TSMS…TNPF. Phosphoserine occurs at positions 231, 272, and 302. The segment covering 299–313 has biased composition (low complexity); the sequence is SASSLYSGSAQSSRS. The SH3 domain occupies 324 to 387; it reads GGARRVRALV…PEAYVKALEE (64 aa). 2 stretches are compositionally biased toward low complexity: residues 403–413 and 452–462; these read TSMSPMTPMNP and RSRTPSRVPSR. The segment covering 463–472 has biased composition (pro residues); it reads APSPAPPPLP. Phosphoserine is present on residues Ser-478 and Ser-481.

Expressed in the epithelial layer of the intestine (at protein level).

The protein resides in the cell membrane. It localises to the cell junction. The protein localises to the cytoplasmic vesicle membrane. Its function is as follows. Phosphoinositides-binding protein that induces the formation of planar or gently curved membrane structures. Binds to phosphoinositides, including to phosphatidylinositol 4,5-bisphosphate (PtdIns(4,5)P2) headgroups. There seems to be no clear preference for a specific phosphoinositide. The protein is BAR/IMD domain-containing adapter protein 2-like 2 (BAIAP2L2) of Homo sapiens (Human).